A 226-amino-acid polypeptide reads, in one-letter code: Ribonuclease 3 (226 aa).

The RNase III domain occupies 6–128 (INRLQRKLGY…LIGGVFLDSD (123 aa)). Residue Glu41 participates in Mg(2+) binding. Residue Asp45 is part of the active site. Mg(2+)-binding residues include Asp114 and Glu117. Residue Glu117 is part of the active site. A DRBM domain is found at 155 to 225 (DPKTRLQEFL…AEQALIKLEL (71 aa)).

This sequence belongs to the ribonuclease III family. Homodimer. The cofactor is Mg(2+).

It localises to the cytoplasm. The enzyme catalyses Endonucleolytic cleavage to 5'-phosphomonoester.. Functionally, digests double-stranded RNA. Involved in the processing of primary rRNA transcript to yield the immediate precursors to the large and small rRNAs (23S and 16S). Processes some mRNAs, and tRNAs when they are encoded in the rRNA operon. Processes pre-crRNA and tracrRNA of type II CRISPR loci if present in the organism. The chain is Ribonuclease 3 from Serratia proteamaculans (strain 568).